Here is a 334-residue protein sequence, read N- to C-terminus: Immune-associated nucleotide-binding protein 3 (334 aa).

One can recognise an AIG1-type G domain in the interval 11–219; that stretch reads KAVKNIVLVG…FRGKMYLEIK (209 aa). Positions 20 to 27 are G1; that stretch reads GRTGNGKS. GTP is bound by residues 20-28 and Ser-41; that span reads GRTGNGKSA. The G2 stretch occupies residues 47 to 51; sequence GVTKT. A G3 region spans residues 69-72; the sequence is DTPG. The segment at 139 to 142 is G4; that stretch reads TGGD. The tract at residues 178 to 180 is G5; it reads NNM. Residue Asn-179 participates in GTP binding. A coiled-coil region spans residues 272–306; that stretch reads SAAHERMVSMLNENLENAHRENIDLRKAHDHEQKK.

Belongs to the TRAFAC class TrmE-Era-EngA-EngB-Septin-like GTPase superfamily. AIG1/Toc34/Toc159-like paraseptin GTPase family. IAN subfamily. Mostly expressed in pollen. Also detected in lateral roots and radicles.

The chain is Immune-associated nucleotide-binding protein 3 from Arabidopsis thaliana (Mouse-ear cress).